We begin with the raw amino-acid sequence, 508 residues long: Methionine--tRNA ligase (508 aa).

The short motif at 12-22 (YYVNDVAHIGH) is the 'HIGH' region element. The 'KMSKS' region signature appears at 295–299 (KISKS). Residue Lys298 participates in ATP binding.

This sequence belongs to the class-I aminoacyl-tRNA synthetase family. MetG type 2B subfamily. As to quaternary structure, monomer.

The protein localises to the cytoplasm. It catalyses the reaction tRNA(Met) + L-methionine + ATP = L-methionyl-tRNA(Met) + AMP + diphosphate. In terms of biological role, is required not only for elongation of protein synthesis but also for the initiation of all mRNA translation through initiator tRNA(fMet) aminoacylation. This is Methionine--tRNA ligase (metG) from Rickettsia prowazekii (strain Madrid E).